The chain runs to 145 residues: 3-hydroxyacyl-[acyl-carrier-protein] dehydratase FabZ (145 aa).

H49 is a catalytic residue.

The protein belongs to the thioester dehydratase family. FabZ subfamily.

It localises to the cytoplasm. It catalyses the reaction a (3R)-hydroxyacyl-[ACP] = a (2E)-enoyl-[ACP] + H2O. Involved in unsaturated fatty acids biosynthesis. Catalyzes the dehydration of short chain beta-hydroxyacyl-ACPs and long chain saturated and unsaturated beta-hydroxyacyl-ACPs. The protein is 3-hydroxyacyl-[acyl-carrier-protein] dehydratase FabZ of Rickettsia africae (strain ESF-5).